The chain runs to 133 residues: Large ribosomal subunit protein uL15 (133 aa).

The interval 1–60 is disordered; the sequence is MALENLKPAQGSTKDRKRVGRGQGSGMGKTSTRGGKGQTARTGYKAKRGFEGGQQPLQRR.

The protein belongs to the universal ribosomal protein uL15 family. Part of the 50S ribosomal subunit.

In terms of biological role, binds to the 23S rRNA. The sequence is that of Large ribosomal subunit protein uL15 from Wolinella succinogenes (strain ATCC 29543 / DSM 1740 / CCUG 13145 / JCM 31913 / LMG 7466 / NCTC 11488 / FDC 602W) (Vibrio succinogenes).